A 535-amino-acid chain; its full sequence is Solute carrier family 22 member 7 (535 aa).

Transmembrane regions (helical) follow at residues 21–41 (LVLM…PVFM), 144–164 (ITST…GYLS), 178–198 (VSSL…MFVV), 202–222 (LTGS…LEWL), 232–252 (VIST…GYLI), 257–277 (WLLL…WWVP), 344–364 (ISLC…GLTL), 375–395 (QTQL…YFLV), 402–422 (LTEA…LLVS), 429–449 (ITAL…TAYL), 464–484 (LGLT…AALL), and 489–509 (LLLP…TALL).

Belongs to the major facilitator (TC 2.A.1) superfamily. Organic cation transporter (TC 2.A.1.19) family. As to expression, expressed in liver and kidney. Expressed at low levels in adipose tissue. Expressed in fetal liver. In kidney, expressed at the brush border of the proximal tubule S3 segment (S3) in the outer stripe and medullary rays. In kidney, expression is higher in female than male.

The protein resides in the basolateral cell membrane. The protein localises to the apical cell membrane. It localises to the cell membrane. It carries out the reaction orotate(out) + L-glutamate(in) = orotate(in) + L-glutamate(out). It catalyses the reaction 3',5'-cyclic GMP(in) = 3',5'-cyclic GMP(out). The enzyme catalyses GMP(in) = GMP(out). The catalysed reaction is 2'-deoxyguanosine(in) = 2'-deoxyguanosine(out). It carries out the reaction GDP(in) = GDP(out). It catalyses the reaction guanosine(in) = guanosine(out). The enzyme catalyses GTP(in) = GTP(out). The catalysed reaction is 3',5'-cyclic AMP(in) = 3',5'-cyclic AMP(out). It carries out the reaction creatinine(in) = creatinine(out). It catalyses the reaction prostaglandin E2(out) = prostaglandin E2(in). The enzyme catalyses 2-oxoglutarate(in) = 2-oxoglutarate(out). The catalysed reaction is glutarate(in) = glutarate(out). It carries out the reaction urate(out) = urate(in). It catalyses the reaction estrone 3-sulfate(out) = estrone 3-sulfate(in). Functionally, functions as a Na(+)-independent bidirectional multispecific transporter. Contributes to the renal and hepatic elimination of endogenous organic compounds from the systemic circulation into the urine and bile, respectively. Capable of transporting a wide range of purine and pyrimidine nucleobases, nucleosides, and nucleotides with cGMP, 2'deoxyguanosine and GMP being the preferred substrates. Functions as a pH- and chloride-independent cGMP bidirectional facilitative transporter that can regulate both intracellular and extracellular levels of cGMP and may be involved in cGMP signaling pathways. Mediates orotate/glutamate bidirectional exchange and most likely display a physiological role in hepatic release of glutamate into the blood. Involved in renal secretion and possible reabsorption of creatinine. Able to uptake prostaglandin E2 (PGE2) and may contribute to PGE2 renal excretion. Also transports alpha-ketoglutarate and urate. Apart from the orotate/glutamate exchange, the counterions for the uptake of other SLC22A7/OAT2 substrates remain to be identified. This Rattus norvegicus (Rat) protein is Solute carrier family 22 member 7.